The sequence spans 392 residues: Antitrypsin (392 aa).

An N-terminal signal peptide occupies residues 1–16 (MKTIICLFTIAIAAMA).

Belongs to the serpin family. Hemolymph.

It localises to the secreted. In terms of biological role, may play a role in the prophenoloxidase activating system in the silkworm hemolymph. In Bombyx mori (Silk moth), this protein is Antitrypsin.